Here is a 333-residue protein sequence, read N- to C-terminus: Biotin synthase (333 aa).

Residues 47-276 (YYGKKVKLNM…TKEIRISGGR (230 aa)) enclose the Radical SAM core domain. Residues C65, C69, and C72 each coordinate [4Fe-4S] cluster. C109, C141, C201, and R271 together coordinate [2Fe-2S] cluster.

It belongs to the radical SAM superfamily. Biotin synthase family. In terms of assembly, homodimer. The cofactor is [4Fe-4S] cluster. [2Fe-2S] cluster is required as a cofactor.

It carries out the reaction (4R,5S)-dethiobiotin + (sulfur carrier)-SH + 2 reduced [2Fe-2S]-[ferredoxin] + 2 S-adenosyl-L-methionine = (sulfur carrier)-H + biotin + 2 5'-deoxyadenosine + 2 L-methionine + 2 oxidized [2Fe-2S]-[ferredoxin]. It participates in cofactor biosynthesis; biotin biosynthesis; biotin from 7,8-diaminononanoate: step 2/2. Catalyzes the conversion of dethiobiotin (DTB) to biotin by the insertion of a sulfur atom into dethiobiotin via a radical-based mechanism. The polypeptide is Biotin synthase (Bacillus licheniformis (strain ATCC 14580 / DSM 13 / JCM 2505 / CCUG 7422 / NBRC 12200 / NCIMB 9375 / NCTC 10341 / NRRL NRS-1264 / Gibson 46)).